We begin with the raw amino-acid sequence, 387 residues long: Alkanesulfonate monooxygenase (387 aa).

The protein belongs to the SsuD family.

It catalyses the reaction an alkanesulfonate + FMNH2 + O2 = an aldehyde + FMN + sulfite + H2O + 2 H(+). Functionally, catalyzes the desulfonation of aliphatic sulfonates. The protein is Alkanesulfonate monooxygenase of Cupriavidus metallidurans (strain ATCC 43123 / DSM 2839 / NBRC 102507 / CH34) (Ralstonia metallidurans).